A 515-amino-acid polypeptide reads, in one-letter code: ATP synthase subunit alpha (515 aa).

Position 171-178 (171-178 (GDRQTGKT)) interacts with ATP.

The protein belongs to the ATPase alpha/beta chains family. In terms of assembly, F-type ATPases have 2 components, CF(1) - the catalytic core - and CF(0) - the membrane proton channel. CF(1) has five subunits: alpha(3), beta(3), gamma(1), delta(1), epsilon(1). CF(0) has three main subunits: a(1), b(2) and c(9-12). The alpha and beta chains form an alternating ring which encloses part of the gamma chain. CF(1) is attached to CF(0) by a central stalk formed by the gamma and epsilon chains, while a peripheral stalk is formed by the delta and b chains.

The protein localises to the cell inner membrane. It catalyses the reaction ATP + H2O + 4 H(+)(in) = ADP + phosphate + 5 H(+)(out). Its function is as follows. Produces ATP from ADP in the presence of a proton gradient across the membrane. The alpha chain is a regulatory subunit. The protein is ATP synthase subunit alpha of Coxiella burnetii (strain CbuK_Q154) (Coxiella burnetii (strain Q154)).